Here is a 165-residue protein sequence, read N- to C-terminus: Peptidyl-prolyl cis-trans isomerase A (165 aa).

Methionine 1 carries the post-translational modification N-acetylmethionine. The residue at position 2 (valine 2) is an N-acetylvaline; in Peptidyl-prolyl cis-trans isomerase A, N-terminally processed. In terms of domain architecture, PPIase cyclophilin-type spans 7–163 (FFDIAVDGEP…KKITIADCGQ (157 aa)). Residue lysine 28 is modified to N6-acetyllysine; alternate. Lysine 28 participates in a covalent cross-link: Glycyl lysine isopeptide (Lys-Gly) (interchain with G-Cter in SUMO2); alternate. Lysine 28 participates in a covalent cross-link: Glycyl lysine isopeptide (Lys-Gly) (interchain with G-Cter in ubiquitin); alternate. Residues lysine 44 and lysine 76 each carry the N6-acetyllysine modification. The residue at position 77 (serine 77) is a Phosphoserine. Lysine 82 is subject to N6-acetyllysine; alternate. A Glycyl lysine isopeptide (Lys-Gly) (interchain with G-Cter in SUMO2); alternate cross-link involves residue lysine 82. Threonine 93 bears the Phosphothreonine mark. The N-linked (GlcNAc...) asparagine glycan is linked to asparagine 108. An N6-acetyllysine mark is found at lysine 125, lysine 131, and lysine 133.

It belongs to the cyclophilin-type PPIase family. PPIase A subfamily. Interacts with protein phosphatase PPP3CA/calcineurin A. Interacts with isoform 2 of BSG/CD147. Interacts with FOXO1; the interaction promotes FOXO1 dephosphorylation, nuclear accumulation and transcriptional activity. Interacts with integrin ITGA2B:ITGB3; the interaction is ROS and peptidyl-prolyl cis-trans isomerase (PPIase) activity-dependent and is increased in the presence of thrombin. Interacts with MAP3K5. Interacts with TARDBP; the interaction is dependent on the RNA-binding activity of TARDBP and the PPIase activity of PPIA/CYPA and the acetylation of PPIA/CYPA at Lys-125 favors the interaction. Interacts with HNRNPA1, HNRNPA2B1, HNRNPC, RBMX, HNRNPK and HNRNPM. In terms of processing, acetylation at Lys-125 markedly inhibits catalysis of cis to trans isomerization. PPIA acetylation also antagonizes the immunosuppressive effects of cyclosporine by inhibiting the sequential steps of cyclosporine binding and calcineurin inhibition. Acetylation at Lys-125 favors the interaction with TARDBP.

It is found in the cytoplasm. The protein resides in the secreted. Its subcellular location is the nucleus. It carries out the reaction [protein]-peptidylproline (omega=180) = [protein]-peptidylproline (omega=0). Its activity is regulated as follows. Binds cyclosporin A (CsA). CsA mediates some of its effects via an inhibitory action on PPIase. Its function is as follows. Catalyzes the cis-trans isomerization of proline imidic peptide bonds in oligopeptides. Exerts a strong chemotactic effect on leukocytes partly through activation of one of its membrane receptors BSG/CD147, initiating a signaling cascade that culminates in MAPK/ERK activation. Activates endothelial cells (ECs) in a proinflammatory manner by stimulating activation of NF-kappa-B and ERK, JNK and p38 MAP-kinases and by inducing expression of adhesion molecules including SELE and VCAM1. Induces apoptosis in ECs by promoting the FOXO1-dependent expression of CCL2 and BCL2L11 which are involved in EC chemotaxis and apoptosis. In response to oxidative stress, initiates proapoptotic and antiapoptotic signaling in ECs via activation of NF-kappa-B and AKT1 and up-regulation of antiapoptotic protein BCL2. Negatively regulates MAP3K5/ASK1 kinase activity, autophosphorylation and oxidative stress-induced apoptosis mediated by MAP3K5/ASK1. Necessary for the assembly of TARDBP in heterogeneous nuclear ribonucleoprotein (hnRNP) complexes and regulates TARDBP binding to RNA UG repeats and TARDBP-dependent expression of HDAC6, ATG7 and VCP which are involved in clearance of protein aggregates. Plays an important role in platelet activation and aggregation. Regulates calcium mobilization and integrin ITGA2B:ITGB3 bidirectional signaling via increased ROS production as well as by facilitating the interaction between integrin and the cell cytoskeleton. Binds heparan sulfate glycosaminoglycans. The polypeptide is Peptidyl-prolyl cis-trans isomerase A (PPIA) (Symphalangus syndactylus (Siamang)).